The sequence spans 133 residues: Ribonuclease P protein component (133 aa).

The protein belongs to the RnpA family. As to quaternary structure, consists of a catalytic RNA component (M1 or rnpB) and a protein subunit.

It catalyses the reaction Endonucleolytic cleavage of RNA, removing 5'-extranucleotides from tRNA precursor.. RNaseP catalyzes the removal of the 5'-leader sequence from pre-tRNA to produce the mature 5'-terminus. It can also cleave other RNA substrates such as 4.5S RNA. The protein component plays an auxiliary but essential role in vivo by binding to the 5'-leader sequence and broadening the substrate specificity of the ribozyme. This chain is Ribonuclease P protein component, found in Pseudomonas entomophila (strain L48).